Consider the following 62-residue polypeptide: Photosystem II reaction center protein Z (62 aa).

The next 2 membrane-spanning stretches (helical) occupy residues 8–28 and 41–61; these read AVFA…VVFS and FSGT…NSLI.

This sequence belongs to the PsbZ family. As to quaternary structure, PSII is composed of 1 copy each of membrane proteins PsbA, PsbB, PsbC, PsbD, PsbE, PsbF, PsbH, PsbI, PsbJ, PsbK, PsbL, PsbM, PsbT, PsbY, PsbZ, Psb30/Ycf12, at least 3 peripheral proteins of the oxygen-evolving complex and a large number of cofactors. It forms dimeric complexes.

Its subcellular location is the plastid. It localises to the chloroplast thylakoid membrane. In terms of biological role, may control the interaction of photosystem II (PSII) cores with the light-harvesting antenna, regulates electron flow through the 2 photosystem reaction centers. PSII is a light-driven water plastoquinone oxidoreductase, using light energy to abstract electrons from H(2)O, generating a proton gradient subsequently used for ATP formation. The polypeptide is Photosystem II reaction center protein Z (Populus alba (White poplar)).